The chain runs to 358 residues: Heme A synthase (358 aa).

Helical transmembrane passes span 22 to 42 (IQVW…VGGA), 107 to 127 (VLGR…WAIK), 133 to 153 (VLLQ…VGWW), 172 to 192 (LAFH…LSQG), 208 to 228 (FAGW…LVAG), 269 to 289 (FVHR…AFYV), 302 to 322 (AFFI…TLLQ), and 324 to 344 (VPIS…CFSV). His-271 is a heme binding site. A heme-binding site is contributed by His-332.

Belongs to the COX15/CtaA family. Type 2 subfamily. Interacts with CtaB. It depends on heme b as a cofactor.

It is found in the cell membrane. The enzyme catalyses Fe(II)-heme o + 2 A + H2O = Fe(II)-heme a + 2 AH2. It participates in porphyrin-containing compound metabolism; heme A biosynthesis; heme A from heme O: step 1/1. Catalyzes the conversion of heme O to heme A by two successive hydroxylations of the methyl group at C8. The first hydroxylation forms heme I, the second hydroxylation results in an unstable dihydroxymethyl group, which spontaneously dehydrates, resulting in the formyl group of heme A. This Bartonella henselae (strain ATCC 49882 / DSM 28221 / CCUG 30454 / Houston 1) (Rochalimaea henselae) protein is Heme A synthase.